A 400-amino-acid polypeptide reads, in one-letter code: tRNA-specific 2-thiouridylase MnmA (400 aa).

ATP-binding positions include 19–26 (AMSGGVDS) and Leu-45. The active-site Nucleophile is the Cys-113. Residues Cys-113 and Cys-210 are joined by a disulfide bond. Position 137 (Gly-137) interacts with ATP. The tract at residues 160–162 (RDQ) is interaction with tRNA. The active-site Cysteine persulfide intermediate is the Cys-210.

Belongs to the MnmA/TRMU family.

Its subcellular location is the cytoplasm. It catalyses the reaction S-sulfanyl-L-cysteinyl-[protein] + uridine(34) in tRNA + AH2 + ATP = 2-thiouridine(34) in tRNA + L-cysteinyl-[protein] + A + AMP + diphosphate + H(+). Catalyzes the 2-thiolation of uridine at the wobble position (U34) of tRNA, leading to the formation of s(2)U34. This is tRNA-specific 2-thiouridylase MnmA from Rhodopseudomonas palustris (strain BisB18).